A 423-amino-acid polypeptide reads, in one-letter code: Ferrochelatase, mitochondrial (423 aa).

The transit peptide at Met-1–Gln-54 directs the protein to the mitochondrion. N6-acetyllysine is present on Lys-57. Protoporphyrin IX-binding residues include Arg-115, Tyr-123, and Ser-130. At Lys-138 the chain carries N6-succinyllysine. Cys-196 contributes to the [2Fe-2S] cluster binding site. Residues His-230 and Asp-383 contribute to the active site. Cys-403, Cys-406, and Cys-411 together coordinate [2Fe-2S] cluster. At Lys-415 the chain carries N6-acetyllysine; alternate. Lys-415 carries the post-translational modification N6-succinyllysine; alternate.

It belongs to the ferrochelatase family. In terms of assembly, homodimer. Homotetramer. Interaction with PGRMC1; the interaction results in decreased FECH activity. Interacts with ABCB10 and SLC25A37; this interaction forms an oligomeric complex. Forms a complex with ABCB7 and ABCB10, where a dimeric FECH bridges ABCB7 and ABCB10 homodimers; this complex may be required for cellular iron homeostasis, mitochondrial function and heme biosynthesis. Interacts with ABCB7 and ABCB10. [2Fe-2S] cluster is required as a cofactor.

The protein resides in the mitochondrion inner membrane. It carries out the reaction heme b + 2 H(+) = protoporphyrin IX + Fe(2+). Its pathway is porphyrin-containing compound metabolism; protoheme biosynthesis; protoheme from protoporphyrin-IX: step 1/1. Functionally, catalyzes the ferrous insertion into protoporphyrin IX and participates in the terminal step in the heme biosynthetic pathway. The protein is Ferrochelatase, mitochondrial of Pan troglodytes (Chimpanzee).